The sequence spans 367 residues: S-adenosylmethionine:tRNA ribosyltransferase-isomerase (367 aa).

It belongs to the QueA family. Monomer.

It is found in the cytoplasm. It catalyses the reaction 7-aminomethyl-7-carbaguanosine(34) in tRNA + S-adenosyl-L-methionine = epoxyqueuosine(34) in tRNA + adenine + L-methionine + 2 H(+). It participates in tRNA modification; tRNA-queuosine biosynthesis. Functionally, transfers and isomerizes the ribose moiety from AdoMet to the 7-aminomethyl group of 7-deazaguanine (preQ1-tRNA) to give epoxyqueuosine (oQ-tRNA). The protein is S-adenosylmethionine:tRNA ribosyltransferase-isomerase of Beijerinckia indica subsp. indica (strain ATCC 9039 / DSM 1715 / NCIMB 8712).